Reading from the N-terminus, the 194-residue chain is MTENSAPAAKPRRSKASKKSTDHPKYSDMILDAVQAEKSRSGSSRQSIQKYIKNNYTVGENADSQIKLSIKRLVTSGTLKQTKGVGASGSFRLAKADEVKKPAKKPKKEIKKAVSPKKAAKPKKAAKSPAKAKKPKVAEKKVKKAPKKKPAPSPRKAKKTKTVRAKPVWASKAKKAKPSKPKAKASPKKSGRKK.

Disordered regions lie at residues Met-1–Met-29 and Ala-96–Lys-194. The H15 domain maps to Asp-22–Lys-95. Composition is skewed to basic residues over residues Pro-102–Arg-164 and Lys-172–Lys-194.

It belongs to the histone H1/H5 family.

The protein resides in the nucleus. The protein localises to the chromosome. Its function is as follows. Histones H1 are necessary for the condensation of nucleosome chains into higher-order structures. The histones H1.0 are found in cells that are in terminal stages of differentiation or that have low rates of cell division. In Xenopus laevis (African clawed frog), this protein is Histone H1.0-A (h1-0-a).